Reading from the N-terminus, the 281-residue chain is UPF0750 membrane protein YvjA (281 aa).

A run of 5 helical transmembrane segments spans residues 14–34 (YVYI…FLLP), 56–76 (AAYV…ILLG), 77–97 (GKFG…VFLT), 108–128 (LLAA…VYLG), and 149–169 (SLGK…MIVF).

The protein belongs to the UPF0750 family.

It is found in the cell membrane. The polypeptide is UPF0750 membrane protein YvjA (yvjA) (Bacillus subtilis (strain 168)).